Here is a 609-residue protein sequence, read N- to C-terminus: Glutamine--fructose-6-phosphate aminotransferase [isomerizing] (609 aa).

Cys-2 functions as the Nucleophile; for GATase activity in the catalytic mechanism. One can recognise a Glutamine amidotransferase type-2 domain in the interval 2–217 (CGIVGAIAGR…DGDTAEIRRD (216 aa)). SIS domains follow at residues 285–425 (AESV…LRGA) and 458–599 (WAEC…VDKP). The active-site For Fru-6P isomerization activity is Lys-604.

As to quaternary structure, homodimer.

The protein resides in the cytoplasm. The catalysed reaction is D-fructose 6-phosphate + L-glutamine = D-glucosamine 6-phosphate + L-glutamate. In terms of biological role, catalyzes the first step in hexosamine metabolism, converting fructose-6P into glucosamine-6P using glutamine as a nitrogen source. This chain is Glutamine--fructose-6-phosphate aminotransferase [isomerizing], found in Xylella fastidiosa (strain 9a5c).